We begin with the raw amino-acid sequence, 292 residues long: UPF0696 protein C11orf68 (292 aa).

Residues 1–11 show a composition bias toward low complexity; the sequence is MAAAAAAAVAG. The segment at 1–60 is disordered; it reads MAAAAAAAVAGVGRGGGGAEPRQERSRARGWAGVERSEGRRMEPGEELEEEGSPGGREDG. Arg29 bears the Omega-N-methylarginine mark. The segment covering 35-44 has biased composition (basic and acidic residues); that stretch reads ERSEGRRMEP.

This sequence belongs to the UPF0696 family.

The polypeptide is UPF0696 protein C11orf68 (C11orf68) (Homo sapiens (Human)).